The sequence spans 1073 residues: Receptor-type guanylate cyclase gcy-23 (1073 aa).

Residues 1-15 (MRRELFIFLLLLGEC) form the signal peptide. Over 16-458 (ANVKVKVGHI…FRNEKCDYTT (443 aa)) the chain is Extracellular. Asparagine 336 carries N-linked (GlcNAc...) asparagine glycosylation. Residues 459–479 (LIIGGCIVLLIILLIICFFIL) traverse the membrane as a helical segment. Over 480 to 1073 (SRVCENRALA…QQQNFSQLGI (594 aa)) the chain is Cytoplasmic. The region spanning 508–808 (MKSMLSIGSS…RVRLNTENYL (301 aa)) is the Protein kinase domain. Residues 813 to 844 (SLVDQMMRMMEQYANNLEKLVAERTGMLEEAN) are a coiled coil. Residues 878–1008 (TVMFSDIVGF…DTVNVASRME (131 aa)) form the Guanylate cyclase domain. Mg(2+) contacts are provided by aspartate 883, isoleucine 884, and aspartate 927.

It belongs to the adenylyl cyclase class-4/guanylyl cyclase family. As to expression, expressed specifically in AFD sensory neurons.

It localises to the cell membrane. The protein resides in the cell projection. Its subcellular location is the cilium. It catalyses the reaction GTP = 3',5'-cyclic GMP + diphosphate. Guanylate cyclase involved in the production of the second messenger cGMP. Regulates thermotaxis responses in AFD sensory neurons. May regulate AFD neuronal activity such as calcium responses to temperature gradients. This Caenorhabditis elegans protein is Receptor-type guanylate cyclase gcy-23.